The sequence spans 1595 residues: Pentafunctional AROM polypeptide (1595 aa).

The interval 1-384 (MGVPTKISIL…HEPRASTVSN (384 aa)) is 3-dehydroquinate synthase. NAD(+) is bound by residues 44–46 (DTN), 81–84 (ESSK), 114–116 (GGV), and aspartate 119. Arginine 130 lines the 7-phospho-2-dehydro-3-deoxy-D-arabino-heptonate pocket. Residue 139–140 (TT) coordinates NAD(+). 7-phospho-2-dehydro-3-deoxy-D-arabino-heptonate is bound by residues aspartate 146 and lysine 152. Lysine 161 lines the NAD(+) pocket. Position 162 (asparagine 162) interacts with 7-phospho-2-dehydro-3-deoxy-D-arabino-heptonate. NAD(+) is bound by residues 179–182 (FLNT) and asparagine 190. Zn(2+) is bound at residue glutamate 194. Residues 194 to 197 (EVIK) and lysine 250 each bind 7-phospho-2-dehydro-3-deoxy-D-arabino-heptonate. Glutamate 260 serves as the catalytic Proton acceptor; for 3-dehydroquinate synthase activity. 7-phospho-2-dehydro-3-deoxy-D-arabino-heptonate contacts are provided by residues 264–268 (RNLLN) and histidine 271. Histidine 271 contacts Zn(2+). The Proton acceptor; for 3-dehydroquinate synthase activity role is filled by histidine 275. 7-phospho-2-dehydro-3-deoxy-D-arabino-heptonate contacts are provided by histidine 287 and lysine 356. Position 287 (histidine 287) interacts with Zn(2+). An EPSP synthase region spans residues 397 to 842 (VSPGVPKGLD…WDSLAQTFKV (446 aa)). Cysteine 824 acts as the For EPSP synthase activity in catalysis. A shikimate kinase region spans residues 866-1057 (ASIFIIGMRG…RRKENTFFVS (192 aa)). Residue 872-879 (GMRGAGKT) participates in ATP binding. Residues 1058 to 1278 (LTLPDLSLAA…AAPGQLSARE (221 aa)) are 3-dehydroquinase. The active-site Proton acceptor; for 3-dehydroquinate dehydratase activity is histidine 1181. The Schiff-base intermediate with substrate; for 3-dehydroquinate dehydratase activity role is filled by lysine 1209. The segment at 1291 to 1595 (AKKFAVIGNP…MGVSPSEDIL (305 aa)) is shikimate dehydrogenase.

In the N-terminal section; belongs to the sugar phosphate cyclases superfamily. Dehydroquinate synthase family. This sequence in the 2nd section; belongs to the EPSP synthase family. The protein in the 3rd section; belongs to the shikimate kinase family. It in the 4th section; belongs to the type-I 3-dehydroquinase family. In the C-terminal section; belongs to the shikimate dehydrogenase family. Homodimer. The cofactor is Zn(2+).

Its subcellular location is the cytoplasm. It carries out the reaction 7-phospho-2-dehydro-3-deoxy-D-arabino-heptonate = 3-dehydroquinate + phosphate. The catalysed reaction is 3-dehydroquinate = 3-dehydroshikimate + H2O. The enzyme catalyses shikimate + NADP(+) = 3-dehydroshikimate + NADPH + H(+). It catalyses the reaction shikimate + ATP = 3-phosphoshikimate + ADP + H(+). It carries out the reaction 3-phosphoshikimate + phosphoenolpyruvate = 5-O-(1-carboxyvinyl)-3-phosphoshikimate + phosphate. It participates in metabolic intermediate biosynthesis; chorismate biosynthesis; chorismate from D-erythrose 4-phosphate and phosphoenolpyruvate: step 2/7. Its pathway is metabolic intermediate biosynthesis; chorismate biosynthesis; chorismate from D-erythrose 4-phosphate and phosphoenolpyruvate: step 3/7. The protein operates within metabolic intermediate biosynthesis; chorismate biosynthesis; chorismate from D-erythrose 4-phosphate and phosphoenolpyruvate: step 4/7. It functions in the pathway metabolic intermediate biosynthesis; chorismate biosynthesis; chorismate from D-erythrose 4-phosphate and phosphoenolpyruvate: step 5/7. It participates in metabolic intermediate biosynthesis; chorismate biosynthesis; chorismate from D-erythrose 4-phosphate and phosphoenolpyruvate: step 6/7. In terms of biological role, the AROM polypeptide catalyzes 5 consecutive enzymatic reactions in prechorismate polyaromatic amino acid biosynthesis. In Ajellomyces capsulatus (strain G186AR / H82 / ATCC MYA-2454 / RMSCC 2432) (Darling's disease fungus), this protein is Pentafunctional AROM polypeptide.